The sequence spans 893 residues: ATPase family gene 2 protein homolog A (893 aa).

Over residues Met1–Leu10 the composition is skewed to basic residues. A disordered region spans residues Met1–Ser26. The tract at residues Met1 to Gln237 is required for interaction with AFG2B and CINP. The span at Asn11–Ser25 shows a compositional bias: polar residues. A Phosphothreonine modification is found at Thr272. Residues Ser274 and Ser279 each carry the phosphoserine modification. Residues Gly394–Thr401 and Gly668–Thr675 each bind ATP. Residue Lys859 forms a Glycyl lysine isopeptide (Lys-Gly) (interchain with G-Cter in SUMO2) linkage.

This sequence belongs to the AAA ATPase family. AFG2 subfamily. Part of the 55LCC heterohexameric ATPase complex composed at least of AIRIM, AFG2A, AFG2B and CINP. Associates with pre-60S ribosomal particles.

It localises to the cytoplasm. It is found in the mitochondrion. The protein localises to the cytoskeleton. Its subcellular location is the spindle. The enzyme catalyses ATP + H2O = ADP + phosphate + H(+). AFG2A alone display limited ATPase activity and is not regulated by RNA or DNA binding. In the context of 55LCC heterohexameric ATPase complex, the ATPase activity increases and is stimulated by DNA binding and inhibited in presence of RNA. In terms of biological role, ATP-dependent chaperone part of the 55LCC heterohexameric ATPase complex which is chromatin-associated and promotes replisome proteostasis to maintain replication fork progression and genome stability. Required for replication fork progression, sister chromatid cohesion, and chromosome stability. The ATPase activity is specifically enhanced by replication fork DNA and is coupled to cysteine protease-dependent cleavage of replisome substrates in response to replication fork damage. Uses ATPase activity to process replisome substrates in S-phase, facilitating their proteolytic turnover from chromatin to ensure DNA replication and mitotic fidelity. Plays an essential role in the cytoplasmic maturation steps of pre-60S ribosomal particles by promoting the release of shuttling protein RSL24D1/RLP24 from the pre-ribosomal particles. May be involved in morphological and functional mitochondrial transformations during spermatogenesis. This is ATPase family gene 2 protein homolog A from Homo sapiens (Human).